The chain runs to 257 residues: UPF0246 protein lpg1366 (257 aa).

Belongs to the UPF0246 family.

The polypeptide is UPF0246 protein lpg1366 (Legionella pneumophila subsp. pneumophila (strain Philadelphia 1 / ATCC 33152 / DSM 7513)).